The primary structure comprises 126 residues: Large ribosomal subunit protein bL19 (126 aa).

This sequence belongs to the bacterial ribosomal protein bL19 family.

Its function is as follows. This protein is located at the 30S-50S ribosomal subunit interface and may play a role in the structure and function of the aminoacyl-tRNA binding site. The protein is Large ribosomal subunit protein bL19 of Prochlorococcus marinus (strain MIT 9312).